We begin with the raw amino-acid sequence, 88 residues long: Phosphocarrier protein HPr (88 aa).

Residues 2-88 (AQKTFKVTAD…ETMKSEGLGE (87 aa)) enclose the HPr domain. S12 is subject to Phosphoserine. H15 serves as the catalytic Pros-phosphohistidine intermediate; alternate. H15 bears the Tele-phosphohistidine; alternate mark. S46 bears the Phosphoserine; by HPrK/P mark.

The protein belongs to the HPr family. Phosphorylated during sporulation.

The protein localises to the cytoplasm. Phosphorylation on Ser-46 inhibits the phosphoryl transfer from enzyme I to HPr. General (non sugar-specific) component of the phosphoenolpyruvate-dependent sugar phosphotransferase system (sugar PTS). This major carbohydrate active-transport system catalyzes the phosphorylation of incoming sugar substrates concomitantly with their translocation across the cell membrane. The phosphoryl group from phosphoenolpyruvate (PEP) is transferred to the phosphoryl carrier protein HPr by enzyme I. Phospho-HPr then transfers it to the PTS EIIA domain. Its function is as follows. P-Ser-HPr interacts with the catabolite control protein A (CcpA), forming a complex that binds to DNA at the catabolite response elements cre, operator sites preceding a large number of catabolite-regulated genes. Thus, P-Ser-HPr is a corepressor in carbon catabolite repression (CCR), a mechanism that allows bacteria to coordinate and optimize the utilization of available carbon sources. P-Ser-HPr also plays a role in inducer exclusion, in which it probably interacts with several non-PTS permeases and inhibits their transport activity. In Bacillus subtilis (strain 168), this protein is Phosphocarrier protein HPr (ptsH).